A 163-amino-acid polypeptide reads, in one-letter code: I-Kappa-B like protein N3 (163 aa).

2 ANK repeats span residues 62–95 and 100–130; these read LGDTCIHVAALANRGKQAIQLIEKLVEYGANLNT and NGDTVLDIAVKNKDHELTVWLWKQPSINLQT.

This sequence belongs to the polydnaviridae I-Kappa-B like protein family.

Suppresses the host immune response through NF-kappa-B inactivation. Possesses ankyrin repeat domains required for NF-kappa-B binding but lacks the regulatory regions required for dissociation from NF-kappa-B and degradation. Therefore, prevents host NF-kappa-B release and subsequent activation. This is I-Kappa-B like protein N3 (N6) from Microplitis demolitor (Parasitoid wasp).